Reading from the N-terminus, the 117-residue chain is Immunoglobulin lambda variable 7-46 (117 aa).

Positions 1–19 (MAWTPLFLFLLTCCPGSNS) are cleaved as a signal peptide. Positions 20-44 (QAVVTQEPSLTVSPGGTVTLTCGSS) are framework-1. One can recognise an Ig-like domain in the interval 20–117 (QAVVTQEPSL…YCLLSYSGAR (98 aa)). An intrachain disulfide couples Cys-41 to Cys-109. The segment at 45–53 (TGAVTSGHY) is complementarity-determining-1. Residues 54 to 70 (PYWFQQKPGQAPRTLIY) form a framework-2 region. The segment at 71–73 (DTS) is complementarity-determining-2. Positions 74 to 109 (NKHSWTPARFSGSLLGGKAALTLLGAQPEDEAEYYC) are framework-3. The segment at 110–117 (LLSYSGAR) is complementarity-determining-3.

As to quaternary structure, immunoglobulins are composed of two identical heavy chains and two identical light chains; disulfide-linked.

It is found in the secreted. The protein resides in the cell membrane. In terms of biological role, v region of the variable domain of immunoglobulin light chains that participates in the antigen recognition. Immunoglobulins, also known as antibodies, are membrane-bound or secreted glycoproteins produced by B lymphocytes. In the recognition phase of humoral immunity, the membrane-bound immunoglobulins serve as receptors which, upon binding of a specific antigen, trigger the clonal expansion and differentiation of B lymphocytes into immunoglobulins-secreting plasma cells. Secreted immunoglobulins mediate the effector phase of humoral immunity, which results in the elimination of bound antigens. The antigen binding site is formed by the variable domain of one heavy chain, together with that of its associated light chain. Thus, each immunoglobulin has two antigen binding sites with remarkable affinity for a particular antigen. The variable domains are assembled by a process called V-(D)-J rearrangement and can then be subjected to somatic hypermutations which, after exposure to antigen and selection, allow affinity maturation for a particular antigen. The polypeptide is Immunoglobulin lambda variable 7-46 (Homo sapiens (Human)).